Here is a 161-residue protein sequence, read N- to C-terminus: Cytochrome c-type biogenesis protein CcmE (161 aa).

The Cytoplasmic segment spans residues 1 to 8 (MNPRRQKR). A helical; Signal-anchor for type II membrane protein transmembrane segment spans residues 9 to 29 (LGIILAILIGVSATIGLMIYA). Topologically, residues 30–161 (LNQNMDLFYT…SEEQKQGSGQ (132 aa)) are periplasmic. Residues His129 and Tyr133 each coordinate heme.

It belongs to the CcmE/CycJ family.

The protein resides in the cell inner membrane. Functionally, heme chaperone required for the biogenesis of c-type cytochromes. Transiently binds heme delivered by CcmC and transfers the heme to apo-cytochromes in a process facilitated by CcmF and CcmH. This is Cytochrome c-type biogenesis protein CcmE from Vibrio vulnificus (strain CMCP6).